A 521-amino-acid chain; its full sequence is GRAS family protein RAD1 (521 aa).

The GRAS domain occupies 137–520; it reads DGSCADGMRL…KPIVAVSCWK (384 aa). A leucine repeat I (LRI) region spans residues 144–212; it reads MRLVQLLIAC…PIGNNSAGSD (69 aa). Positions 231–301 are VHIID; it reads FKLVYENCPH…HRVRRLRITA (71 aa). The VHIID signature appears at 262–266; that stretch reads LHVVD. The segment at 311 to 343 is leucine repeat II (LRII); it reads VIGEELSIYAKNLGIHLEFSIVEKNLENLKPKD. The PFYRE stretch occupies residues 352–443; the sequence is LVVNSILQLH…QFYFAEEIKN (92 aa). The interval 446 to 520 is SAW; sequence SCEGPLRMER…KPIVAVSCWK (75 aa).

Belongs to the GRAS family. As to quaternary structure, interacts with RAM1. Interacts with NSP2.

The protein resides in the nucleus. In terms of biological role, transcription factor acting as a regulator of arbuscular mycorrhiza (AM)-related genes (e.g. STR). Required for the morphogenesis of arbuscules upon symbiosis with AM fungi (e.g. Glomus versiforme). Also involved in restricting mycorrhizal colonization of the root meristem. The polypeptide is GRAS family protein RAD1 (Medicago truncatula (Barrel medic)).